Reading from the N-terminus, the 1435-residue chain is Protein clueless (1435 aa).

A disordered region spans residues 1 to 97 (MALEMDSKNS…KPEGDGDADA (97 aa)). Residues 18 to 35 (AAAATTKTNKAKENNNLA) show a composition bias toward low complexity. A compositionally biased stretch (polar residues) spans 38 to 50 (KKNQSQNLVNGNG). Residues 58 to 67 (TKKKGKKNRN) show a composition bias toward basic residues. Position 266 is a phosphoserine (S266). The Clu domain maps to 420-662 (RAEDAFSSKL…RTFPPDVNFL (243 aa)). Composition is skewed to basic and acidic residues over residues 719-731 (KKPEETQSEEKKQ) and 752-762 (PNEKEKDTPVE). 2 disordered regions span residues 719 to 762 (KKPE…TPVE) and 952 to 998 (VSND…SSSS). Basic residues predominate over residues 959-975 (KKRGGNGGKHNKHKSSK). Positions 988-998 (NGGSTTSSSSS) are enriched in low complexity. 3 TPR repeats span residues 1096 to 1129 (AYNFYTTGQAKIQQGLFKEGYELISEALNLLNNV), 1222 to 1255 (ALIDSNISLILHALGEYELSLRFIEHALKLNLKY), and 1257 to 1290 (GNKAMHVAVSYHLMARTQSCMGDFRSALNNEKET). Residues 1407-1435 (EVLAPQDNNKEQAATAQQLTNGDKVAVSS) are disordered. Over residues 1417–1435 (EQAATAQQLTNGDKVAVSS) the composition is skewed to polar residues.

This sequence belongs to the CLU family.

The protein resides in the cytoplasm. MRNA-binding protein involved in proper cytoplasmic distribution of mitochondria. The polypeptide is Protein clueless (Drosophila persimilis (Fruit fly)).